The primary structure comprises 761 residues: Phosphoribosylformylglycinamidine synthase subunit PurL (761 aa).

His-58 is a catalytic residue. Positions 61 and 105 each coordinate ATP. Glu-107 is a binding site for Mg(2+). Residues Ser-108–His-111 and Arg-130 each bind substrate. The active-site Proton acceptor is His-109. Asp-131 serves as a coordination point for Mg(2+). A substrate-binding site is contributed by Gln-259. Mg(2+) is bound at residue Asp-287. Glu-331–Gln-333 is a substrate binding site. Positions 519 and 556 each coordinate ATP. Residue Asn-557 coordinates Mg(2+). Ser-559 is a binding site for substrate.

The protein belongs to the FGAMS family. Monomer. Part of the FGAM synthase complex composed of 1 PurL, 1 PurQ and 2 PurS subunits.

The protein resides in the cytoplasm. It carries out the reaction N(2)-formyl-N(1)-(5-phospho-beta-D-ribosyl)glycinamide + L-glutamine + ATP + H2O = 2-formamido-N(1)-(5-O-phospho-beta-D-ribosyl)acetamidine + L-glutamate + ADP + phosphate + H(+). It participates in purine metabolism; IMP biosynthesis via de novo pathway; 5-amino-1-(5-phospho-D-ribosyl)imidazole from N(2)-formyl-N(1)-(5-phospho-D-ribosyl)glycinamide: step 1/2. In terms of biological role, part of the phosphoribosylformylglycinamidine synthase complex involved in the purines biosynthetic pathway. Catalyzes the ATP-dependent conversion of formylglycinamide ribonucleotide (FGAR) and glutamine to yield formylglycinamidine ribonucleotide (FGAM) and glutamate. The FGAM synthase complex is composed of three subunits. PurQ produces an ammonia molecule by converting glutamine to glutamate. PurL transfers the ammonia molecule to FGAR to form FGAM in an ATP-dependent manner. PurS interacts with PurQ and PurL and is thought to assist in the transfer of the ammonia molecule from PurQ to PurL. This chain is Phosphoribosylformylglycinamidine synthase subunit PurL, found in Rhodococcus opacus (strain B4).